We begin with the raw amino-acid sequence, 129 residues long: Lysozyme C (129 aa).

The 129-residue stretch at 1-129 (KVYGRCELAA…VQAWIRGCRL (129 aa)) folds into the C-type lysozyme domain. Disulfide bonds link C6/C127, C30/C115, C64/C80, and C76/C94. Residues E35 and D52 contribute to the active site.

The protein belongs to the glycosyl hydrolase 22 family. Monomer.

It is found in the secreted. It carries out the reaction Hydrolysis of (1-&gt;4)-beta-linkages between N-acetylmuramic acid and N-acetyl-D-glucosamine residues in a peptidoglycan and between N-acetyl-D-glucosamine residues in chitodextrins.. Lysozymes have primarily a bacteriolytic function; those in tissues and body fluids are associated with the monocyte-macrophage system and enhance the activity of immunoagents. This chain is Lysozyme C (LYZ), found in Tragopan satyra (Satyr tragopan).